A 221-amino-acid polypeptide reads, in one-letter code: UPF0319 protein NTHI1987 (221 aa).

Residues 1–21 form the signal peptide; sequence MKLRAVVLGLATLCTSTATFA.

The protein belongs to the UPF0319 family.

The chain is UPF0319 protein NTHI1987 from Haemophilus influenzae (strain 86-028NP).